The following is a 910-amino-acid chain: Triacylglycerol lipase 4 (910 aa).

A compositionally biased stretch (basic and acidic residues) spans 51–66 (SKDNSDVERVEEDAGK). The segment at 51–120 (SKDNSDVERV…TDEGEDERQG (70 aa)) is disordered. Serine 55 carries the post-translational modification Phosphoserine. Residues 70–85 (TGKNKTTNKVNFNLDT) show a composition bias toward polar residues. Positions 90–116 (KLDDDQETVTENENNDIEMVETDEGED) are enriched in acidic residues. Positions 282–483 (LVLSGGGTFG…DNDLPISRLS (202 aa)) constitute a PNPLA domain. The short motif at 286-291 (GGGTFG) is the GXGXXG element. Residues 313 to 317 (GSSAG) carry the GXSXG motif. The active-site Nucleophile is the serine 315. Aspartate 470 acts as the Proton acceptor in catalysis. Disordered stretches follow at residues 657–683 (EQTS…DNHI) and 713–777 (SPSG…PILQ). Over residues 666 to 683 (PENSTLLTRTPTKGDNHI) the composition is skewed to polar residues. Threonine 675 carries the phosphothreonine; by Cdk1 modification. Serine 737, serine 749, serine 751, and serine 836 each carry phosphoserine. Polar residues predominate over residues 739 to 768 (TISTSRRPAKSFSFSVASPTSRMLRQSSKI). A disordered region spans residues 874–910 (RRHSIDGRPPSQATKSSPFRSRPSSSTQHKSTTSFTQ). The segment covering 889-899 (SSPFRSRPSSS) has biased composition (low complexity). A Phosphoserine; by Cdk1 modification is found at serine 890. A compositionally biased stretch (polar residues) spans 900 to 910 (TQHKSTTSFTQ).

In terms of processing, phosphorylation at Thr-675 and Ser-890 by Cdk1/CDC28 stimulates enzyme activity in vivo.

It is found in the lipid droplet. The enzyme catalyses a triacylglycerol + H2O = a diacylglycerol + a fatty acid + H(+). It catalyses the reaction 1,2,3-tri-(9Z-octadecenoyl)-glycerol + H2O = di-(9Z)-octadecenoylglycerol + (9Z)-octadecenoate + H(+). It carries out the reaction 1,2-dihexadecanoyl-sn-glycero-3-phosphocholine + H2O = 1-hexadecanoyl-sn-glycero-3-phosphocholine + hexadecanoate + H(+). The catalysed reaction is cholesteryl (9Z-octadecenoate) + H2O = cholesterol + (9Z)-octadecenoate + H(+). The enzyme catalyses 1-(9Z-octadecenoyl)-sn-glycero-3-phosphate + (9Z)-octadecenoyl-CoA = 1,2-di-(9Z-octadecenoyl)-sn-glycero-3-phosphate + CoA. With respect to regulation, phosphorylated and activated by cyclin-dependent kinase 1 (Cdk1/CDC28). Loses its lipolytic activity in cells lacking nonpolar lipids, but retains its side activity as lysophospholipid acyltransferase. Functionally, lipid particle-localized triacylglycerol (TAG) lipase. The lipid droplet/particle is a lipid storage compartment which serves as a depot of energy and building blocks for membrane lipid biosynthesis. Involved in the mobilization of the non-polar storage lipids triacylglycerols (TAGs) from lipid particles by hydrolysis of TAGs, releasing and supplying specific fatty acids to the appropriate metabolic pathways. Also has steryl ester (SE) hydrolase and phospholipase A(2) (PLA(2)) activities, and catalyzes the acylation of lysophosphatidic acid (LPA). Contributes to early bud formation in late G1 phase of the cell cycle upon phosphorylation and activation by cyclin-dependent kinase 1 (Cdk1/CDC28). The polypeptide is Triacylglycerol lipase 4 (TGL4) (Saccharomyces cerevisiae (strain ATCC 204508 / S288c) (Baker's yeast)).